The sequence spans 127 residues: Evasin-4 (127 aa).

The first 23 residues, 1–23, serve as a signal peptide directing secretion; the sequence is MAFKYWFVFAAVLYARQWLSTKC. Intrachain disulfides connect C50/C69, C65/C112, C86/C117, and C107/C126. N-linked (GlcNAc...) asparagine glycosylation is found at N54, N64, N70, N77, N83, N106, and N114.

Belongs to the evasin C8 family. As to quaternary structure, monomer.

Its subcellular location is the secreted. In terms of biological role, salivary chemokine-binding protein which has chemokine-neutralizing activity and binds to host chemokines CCL1, CCL3, CCL5, CCL7, CCL8, CCL11, CCL14, CCL15, CCL16, CCL17, CCL18, CCL19, CCL21, CCL22, CCL23, CCL24, CCL25 and CCL26 with nanomolar affinity. Binds to CCL3 and CCL5 with 1:1 stoichiometry. Although binding to CCL25 is observed, does not inhibit CCL25-induced chemotaxis. Has been shown to reduce cardiac injury and inflammation in mice through its anti-CCL5 activity. The chain is Evasin-4 from Rhipicephalus sanguineus (Brown dog tick).